Consider the following 120-residue polypeptide: Large ribosomal subunit protein bL12 (120 aa).

Belongs to the bacterial ribosomal protein bL12 family. Homodimer. Part of the ribosomal stalk of the 50S ribosomal subunit. Forms a multimeric L10(L12)X complex, where L10 forms an elongated spine to which 2 to 4 L12 dimers bind in a sequential fashion. Binds GTP-bound translation factors.

Functionally, forms part of the ribosomal stalk which helps the ribosome interact with GTP-bound translation factors. Is thus essential for accurate translation. In Shouchella clausii (strain KSM-K16) (Alkalihalobacillus clausii), this protein is Large ribosomal subunit protein bL12.